The chain runs to 177 residues: Interleukin-1 receptor antagonist protein (177 aa).

A signal peptide spans 1 to 25; the sequence is MEVSRYLCSYLISFLLFLFHSETAC. A disulfide bridge links Cys-91 with Cys-141. The N-linked (GlcNAc...) asparagine glycan is linked to Asn-109.

This sequence belongs to the IL-1 family.

It is found in the secreted. Functionally, anti-inflammatory antagonist of interleukin-1 family of proinflammatory cytokines such as interleukin-1beta/IL1B and interleukin-1alpha/IL1A. Protects from immune dysregulation and uncontrolled systemic inflammation triggered by IL1 for a range of innate stimulatory agents such as pathogens. The sequence is that of Interleukin-1 receptor antagonist protein (IL1RN) from Sus scrofa (Pig).